The sequence spans 761 residues: Complement factor B (761 aa).

Positions Met1 to Met25 are cleaved as a signal peptide. Sushi domains follow at residues Ser35 to Ala100, Ile101 to Asp160, and Thr163 to Asp220. Intrachain disulfides connect Cys37–Cys76, Cys62–Cys98, Cys103–Cys145, Cys131–Cys158, Cys165–Cys205, and Cys191–Cys218. N-linked (GlcNAc...) asparagine glycans are attached at residues Asn122 and Asn142. The region spanning Asn270–Leu469 is the VWFA domain. The Mg(2+) site is built by Ser278 and Ser280. N-linked (GlcNAc...) asparagine glycosylation occurs at Asn285. Thr353 provides a ligand contact to Mg(2+). A glycan (N-linked (GlcNAc...) asparagine) is linked at Asn378. Residues Leu477–Gln754 form the Peptidase S1 domain. 5 disulfides stabilise this stretch: Cys478/Cys596, Cys511/Cys527, Cys599/Cys615, Cys656/Cys682, and Cys695/Cys725. Active-site charge relay system residues include His526 and Asp576. Residue Ser699 is the Charge relay system of the active site.

The protein belongs to the peptidase S1 family. Monomer. Interacts with complement C3b; this interaction is dependent on the presence of Mg(2+). In terms of assembly, catalytic component of the C3 convertase of the alternative complement pathway, also named C3bBb, composed of complement factor B Bb and complement C3b. Catalytic component of the C5 convertase of the alternative complement pathway, also named C3bBb3b, composed of complement factor B Bb and additional molecules of complement C3b. Interacts to CFP; this interaction contributes to the stabilization of the active C3-convertase enzyme complex. The cofactor is Mg(2+). Mn(2+) serves as cofactor. Post-translationally, cleaved by CFD following activation of the alternative complement system, generating Ba and Bb chains. Cleavage and activation takes place when CFB is already associated with complement C3b.

The protein resides in the secreted. It is found in the cell surface. It catalyses the reaction Cleavage of Arg-|-Ser bond in complement component C3 alpha-chain to yield C3a and C3b, and Arg-|-Xaa bond in complement component C5 alpha-chain to yield C5a and C5b.. Its function is as follows. Precursor of the catalytic component of the C3 and C5 convertase complexes of the alternative pathway of the complement system, a cascade of proteins that leads to phagocytosis and breakdown of pathogens and signaling that strengthens the adaptive immune system. The alternative complement pathway acts as an amplification loop that enhances other complement pathways (classical, lectin and GZMK) by promoting formation of additional C3 and C5 convertases. CFB is cleaved and activated by CFD to generate Ba and Bb chains; Bb chain constituting the catalytic component of the C3 and C5 convertases. Functionally, serine protease component of the complement C3 and C5 convertase complexes of the alternative complement pathway. Following cleavage and activation by factor D (CFD), forms the C3 convertase together with complement C3b. As part of the C3 convertase, cleaves and activates C3 into C3a anaphylatoxin and C3b opsonin, the next components of the complement pathways. When an additional complement C3b molecule binds to the C3 convertase, forms the C5 convertase, which cleaves and activates C5 into C5a anaphylatoxin and C5b component of the membrane attack complex. Involved in proliferation and differentiation of preactivated B-lymphocytes, rapid spreading of peripheral blood monocytes, stimulation of lymphocyte blastogenesis and lysis of erythrocytes. This is Complement factor B (CFB) from Bos taurus (Bovine).